The chain runs to 180 residues: Adenine phosphoribosyltransferase (180 aa).

The protein belongs to the purine/pyrimidine phosphoribosyltransferase family. As to quaternary structure, homodimer.

It is found in the cytoplasm. The enzyme catalyses AMP + diphosphate = 5-phospho-alpha-D-ribose 1-diphosphate + adenine. The protein operates within purine metabolism; AMP biosynthesis via salvage pathway; AMP from adenine: step 1/1. Functionally, catalyzes a salvage reaction resulting in the formation of AMP, that is energically less costly than de novo synthesis. This chain is Adenine phosphoribosyltransferase, found in Rhizobium johnstonii (strain DSM 114642 / LMG 32736 / 3841) (Rhizobium leguminosarum bv. viciae).